We begin with the raw amino-acid sequence, 487 residues long: MLQDSVGEVTTKYHALSVPLSLECGVSLSGVRIAYERYGRADGKNVILVCHPLTGDAHAAGFHKGDTKPGWWDGIIGPGKALDTNRYCVIAANVLGGCKGSTGPSSEDPATGKPYGTTFPVITIRDMVHAEHQLLEDLGISELYAVIGGSMGGMQAMQWSVEFPSFVRRIICIASAGYTTPMHIAFGAVGRAAIMSDPEWNGGNYPAEKKPNHGLSLARMMAHITYLSDESMRTKFGRRLQKQDAFGYGFDTEFSVESYLQHQGETFVERFDPNSYLYITRAVDYYDLTKNGSLTEGLAATQAKFLIISVSSDWLYPPYLSQEIMLALTTNNREARYAEIVSPHGHDGFLLENAQLNYIVGQFLTPMTVEDLMTNNPPSIQETSSIREAAELMIGHEINHLPVVSGNGTLSGIVTSWDIAKSVAGDFQDLAEIMTKDVITIQRSDSLRLAASLMEKHAISALPVVDDSNHVLGMLTSETLSLSEVLQ.

The AB hydrolase-1 domain maps to 45-352; that stretch reads NVILVCHPLT…PHGHDGFLLE (308 aa). Ser-150 (nucleophile) is an active-site residue. Arg-219 contributes to the substrate binding site. Active-site residues include Asp-313 and His-346. Asp-347 contacts substrate. CBS domains lie at 373–430 and 434–487; these read MTNN…FQDL and MTKD…EVLQ.

Belongs to the AB hydrolase superfamily. MetX family. As to quaternary structure, homodimer.

The protein localises to the cytoplasm. It carries out the reaction L-homoserine + acetyl-CoA = O-acetyl-L-homoserine + CoA. Its pathway is amino-acid biosynthesis; L-methionine biosynthesis via de novo pathway; O-acetyl-L-homoserine from L-homoserine: step 1/1. Functionally, transfers an acetyl group from acetyl-CoA to L-homoserine, forming acetyl-L-homoserine. This chain is Homoserine O-acetyltransferase, found in Methanocorpusculum labreanum (strain ATCC 43576 / DSM 4855 / Z).